The sequence spans 696 residues: D-(-)-3-hydroxybutyrate oligomer hydrolase (696 aa).

The first 26 residues, 1-26 (MDTHGWGSRILVGAALAALTMLGACN), serve as a signal peptide directing secretion. The active-site Charge relay system is the serine 309.

The protein belongs to the D-(-)-3-hydroxybutyrate oligomer hydrolase family.

It localises to the secreted. It catalyses the reaction (3R)-hydroxybutanoate dimer + H2O = 2 (R)-3-hydroxybutanoate + H(+). Its pathway is lipid metabolism; butanoate metabolism. Its function is as follows. Participates in the degradation of poly-3-hydroxybutyrate (PHB). It works downstream of poly(3-hydroxybutyrate) depolymerase, hydrolyzing D(-)-3-hydroxybutyrate oligomers of various length (3HB-oligomers) into 3HB-monomers. The protein is D-(-)-3-hydroxybutyrate oligomer hydrolase of Burkholderia vietnamiensis (strain G4 / LMG 22486) (Burkholderia cepacia (strain R1808)).